The primary structure comprises 285 residues: ATP synthase gamma chain (285 aa).

The protein belongs to the ATPase gamma chain family. In terms of assembly, F-type ATPases have 2 components, CF(1) - the catalytic core - and CF(0) - the membrane proton channel. CF(1) has five subunits: alpha(3), beta(3), gamma(1), delta(1), epsilon(1). CF(0) has three main subunits: a, b and c.

It localises to the cell membrane. Produces ATP from ADP in the presence of a proton gradient across the membrane. The gamma chain is believed to be important in regulating ATPase activity and the flow of protons through the CF(0) complex. The protein is ATP synthase gamma chain of Geobacillus kaustophilus (strain HTA426).